The sequence spans 141 residues: Nucleoside diphosphate kinase (141 aa).

Positions 11, 59, 87, 93, 104, and 114 each coordinate ATP. The active-site Pros-phosphohistidine intermediate is H117.

The protein belongs to the NDK family. Homotetramer. Mg(2+) serves as cofactor.

Its subcellular location is the cytoplasm. The enzyme catalyses a 2'-deoxyribonucleoside 5'-diphosphate + ATP = a 2'-deoxyribonucleoside 5'-triphosphate + ADP. It carries out the reaction a ribonucleoside 5'-diphosphate + ATP = a ribonucleoside 5'-triphosphate + ADP. Its function is as follows. Major role in the synthesis of nucleoside triphosphates other than ATP. The ATP gamma phosphate is transferred to the NDP beta phosphate via a ping-pong mechanism, using a phosphorylated active-site intermediate. This Pseudomonas entomophila (strain L48) protein is Nucleoside diphosphate kinase.